The sequence spans 189 residues: Interferon alpha-21 (189 aa).

An N-terminal signal peptide occupies residues 1 to 23 (MALSFSLLMAVLVLSYKSICSLG). 2 disulfide bridges follow: Cys-24-Cys-122 and Cys-52-Cys-162.

It belongs to the alpha/beta interferon family.

It is found in the secreted. Functionally, produced by macrophages, IFN-alpha have antiviral activities. Interferon stimulates the production of two enzymes: a protein kinase and an oligoadenylate synthetase. This Homo sapiens (Human) protein is Interferon alpha-21 (IFNA21).